The sequence spans 533 residues: Berberine bridge enzyme-like 28 (533 aa).

An N-terminal signal peptide occupies residues 1 to 23 (MEFSSFLFTILLFSLNISPLVSA). The cysteines at positions 34 and 96 are disulfide-linked. In terms of domain architecture, FAD-binding PCMH-type spans 74–249 (ETPKPVSIIT…LSWKVKLVDV (176 aa)). Pros-8alpha-FAD histidine is present on H111. N-linked (GlcNAc...) asparagine glycosylation is found at N142 and N440.

Belongs to the oxygen-dependent FAD-linked oxidoreductase family. Requires FAD as cofactor.

It localises to the secreted. Its subcellular location is the cell wall. Functionally, involved in adaptation to salt stress. This Arabidopsis thaliana (Mouse-ear cress) protein is Berberine bridge enzyme-like 28.